Reading from the N-terminus, the 120-residue chain is Ribonuclease P protein component (120 aa).

It belongs to the RnpA family. Consists of a catalytic RNA component (M1 or rnpB) and a protein subunit.

It catalyses the reaction Endonucleolytic cleavage of RNA, removing 5'-extranucleotides from tRNA precursor.. RNaseP catalyzes the removal of the 5'-leader sequence from pre-tRNA to produce the mature 5'-terminus. It can also cleave other RNA substrates such as 4.5S RNA. The protein component plays an auxiliary but essential role in vivo by binding to the 5'-leader sequence and broadening the substrate specificity of the ribozyme. This Chlamydia trachomatis serovar D (strain ATCC VR-885 / DSM 19411 / UW-3/Cx) protein is Ribonuclease P protein component.